The sequence spans 265 residues: MKFTIMSKGDQSSDALASTMKEYLLDFGFIMDEQEPDIVISVGGDGTLLYAFHRYYNRLDETAFVGVHTGHLGFYADWLPTEVEKLVIAIAKTPFQVVEYPLLEVIIRYVNGSKESQYLAMNEATVKSAEGTLVTEVEIRGEYFETFRGDGLCISTPSGSTAYNKALGGAIIHPSIEAIQIAEMASINNRVFRTVGSPLVLPKHHTCVLKPTAGMNLQITVDHLTMVHQDVKSIQYRVANEKVRFVRFRPFPFWKRVRDSFVADK.

Asp45 serves as the catalytic Proton acceptor. NAD(+) is bound by residues 45-46, 122-123, Arg148, Asp150, and Ala185; these read DG and NE.

This sequence belongs to the NAD kinase family. It depends on a divalent metal cation as a cofactor.

Its subcellular location is the cytoplasm. The enzyme catalyses NAD(+) + ATP = ADP + NADP(+) + H(+). Its function is as follows. Involved in the regulation of the intracellular balance of NAD and NADP, and is a key enzyme in the biosynthesis of NADP. Catalyzes specifically the phosphorylation on 2'-hydroxyl of the adenosine moiety of NAD to yield NADP. This is NAD kinase 1 from Bacillus cereus (strain ATCC 10987 / NRS 248).